Consider the following 800-residue polypeptide: MAANLGEPINNEWVQQYNSGVNRESGMELPMQENPEWEKARQALASISKANATSADKGSESGQTNSQFVSQQGEAILQQQQYYQWYSQYNYSYPYNYYYQMNMYNGYNTPGQYGMPGNYQSMSSQSGQHQGNLAQPPVPGLEDSSMSYSNVQSPVSLCNTQTASHQQVNHSMTKPCIQGRNAGNQSNPHSSSNQPNYSQQSFNEGPKQKKGQQLWNRMKHAPGSGGFKFNIQKRPLVMANQNFASSEHHDNSAGQQQQQATHMHHPLQQPQQQPTIEKITEHGNNSSKPEDWPQAMKEYVQRCFTSCESEEDKDRTEKLLKEVLQARLQDGSAYTIDWSREPLPGKDGGKESPKKKRWEQTTLQTSHGSTITITQSPRGGGNSTNAATLRGRGSFIKKFGNRNVFMKESSSSSSAGSRSRSRSPSHSPHRRYRRSDSDSDSAYSGNETRDGGRRNFQKARGRGGHMDRGGRGRLQKGKRSDQAFSKKNRKKNPVAMELEDPEKEFKKEKRAARFQHGHGPKKLRMEPLVLQINNMDPSAADNLDWDEIKIVGNSQDITKHYLRLTCAPDPSTVRPVPVLKKSLTMVKADFKNKQDYVFACEQMKSIRQDLTVQGIRTEFTVEVYETHARIALEKGDHEEFNQCQAQLKSLYAENLAGNVGEFTAYRILYYIFTKNSGDLTTELAHLTKELKADACVAHALSLREAWALSNYHRFFKLYRQAPRMSGYLIDKFAERERKAALKAMIKTFRPLLPVSFVQSELAFANEEECQSFLAPLSLVYAGNDASQIDCKLSLAVLPNI.

5 disordered regions span residues 118–149 (NYQS…MSYS), 175–229 (PCIQ…GFKF), 245–273 (SSEH…PQQQ), 335–394 (TIDW…GRGS), and 407–519 (KESS…HGHG). Low complexity-rich tracts occupy residues 120–131 (QSMSSQSGQHQG) and 184–201 (NQSN…SQQS). The span at 252-261 (SAGQQQQQAT) shows a compositional bias: polar residues. Positions 338–352 (WSREPLPGKDGGKES) are enriched in basic and acidic residues. The segment covering 360-387 (QTTLQTSHGSTITITQSPRGGGNSTNAA) has biased composition (polar residues). Positions 409–418 (SSSSSSAGSR) are enriched in low complexity. 2 stretches are compositionally biased toward basic residues: residues 419–433 (SRSR…RRYR) and 508–519 (EKRAARFQHGHG). The PCI domain occupies 636 to 800 (DHEEFNQCQA…KLSLAVLPNI (165 aa)).

The chain is Leukocyte receptor cluster member 8 homolog (leng8) from Xenopus laevis (African clawed frog).